Here is a 521-residue protein sequence, read N- to C-terminus: MMNNIHLDKILILDFGSQYTQLIARRVREIGVYCELFPYDVDSEFIKKLNPKGIILSGGPDTVTLDNAAKAPSIIFDLNIPILGICYGMQTMAIQLGGRATSANKHEYGFAKVRVRNHSPLLSDISDEGHGLLDVWMSHGIEVEQLPNGFKLIASTDNCNIAGFANVEKHYYGLQFHPEVTHTKQGERILERFISGICQCEKNWTTDNIIAKLVQNLKDQIGNANILLGLSGGVDSLVVAVLLQQAVGKQLTCVFVDNGLLRFNEGNEVMQIFAQNMDMKVIRANAHKKFYDALLNENEPEAKRKIIGRAFIEVFEEEAKKLDNIQFLAQGTIYPDVIESADAKYGKAKLIKSHHNVGGLPNDLQFKLVEPLKELFKDEVRKISVKLSIPPHIIYRHPFPGPGLGVRILGQVKQEYANILRQADAIFMDELHKNNLYDTVNQAFAVFLPIKSVGITGDERRYDYVIALRAVETIDFMTARWARLPYDFLDLVSNRIMNEISRISRVVYDVSGKPPATIEWE.

The Glutamine amidotransferase type-1 domain maps to 9-203 (KILILDFGSQ…ISGICQCEKN (195 aa)). Residue C86 is the Nucleophile of the active site. Catalysis depends on residues H177 and E179. The 193-residue stretch at 204–396 (WTTDNIIAKL…LSIPPHIIYR (193 aa)) folds into the GMPS ATP-PPase domain. 231-237 (SGGVDSL) contributes to the ATP binding site.

As to quaternary structure, homodimer.

The enzyme catalyses XMP + L-glutamine + ATP + H2O = GMP + L-glutamate + AMP + diphosphate + 2 H(+). Its pathway is purine metabolism; GMP biosynthesis; GMP from XMP (L-Gln route): step 1/1. Its function is as follows. Catalyzes the synthesis of GMP from XMP. This is GMP synthase [glutamine-hydrolyzing] from Ruthia magnifica subsp. Calyptogena magnifica.